Here is a 308-residue protein sequence, read N- to C-terminus: GTP cyclohydrolase FolE2 (308 aa).

This sequence belongs to the GTP cyclohydrolase IV family.

The enzyme catalyses GTP + H2O = 7,8-dihydroneopterin 3'-triphosphate + formate + H(+). Its pathway is cofactor biosynthesis; 7,8-dihydroneopterin triphosphate biosynthesis; 7,8-dihydroneopterin triphosphate from GTP: step 1/1. Converts GTP to 7,8-dihydroneopterin triphosphate. In Colwellia psychrerythraea (strain 34H / ATCC BAA-681) (Vibrio psychroerythus), this protein is GTP cyclohydrolase FolE2.